The following is a 101-amino-acid chain: Small ribosomal subunit protein uS14 (101 aa).

It belongs to the universal ribosomal protein uS14 family. Part of the 30S ribosomal subunit. Contacts proteins S3 and S10.

Binds 16S rRNA, required for the assembly of 30S particles and may also be responsible for determining the conformation of the 16S rRNA at the A site. This chain is Small ribosomal subunit protein uS14, found in Wigglesworthia glossinidia brevipalpis.